Consider the following 589-residue polypeptide: PAN2-PAN3 deadenylation complex subunit pan3 (589 aa).

The disordered stretch occupies residues 1–32 (MSVRKNSPASPKPTSRSRESSRSPSVTDLKDH). A C3H1-type zinc finger spans residues 34 to 63 (KAKRTLCRNILLYGSCKHSENGCAFRHDGP). Residues 74 to 94 (YSVKKKLNAASASFQPVRALP) carry the PABPC-interacting motif-2 (PAM-2) motif. Residues 201-457 (EASRQTISAL…NLELFLQNHI (257 aa)) are pseudokinase domain. ATP contacts are provided by residues lysine 255 and 302-309 (DFYPCTTT). Positions 458-496 (ESFFPIMSSPYVECEKMERKISDAFQHGRFFNILCKIMF) form a coiled coil. Positions 497 to 589 (IIDNNRASRE…DNVYEMEINS (93 aa)) are knob domain.

Belongs to the protein kinase superfamily. PAN3 family. Homodimer. Forms a heterotrimer with a catalytic subunit pan2 to form the poly(A)-nuclease (PAN) deadenylation complex. Interacts (via PAM-2 motif) with poly(A)-binding protein pab1 (via PABC domain), conferring substrate specificity of the enzyme complex.

It localises to the cytoplasm. The protein resides in the nucleus. Its function is as follows. Regulatory subunit of the poly(A)-nuclease (PAN) deadenylation complex, one of two cytoplasmic mRNA deadenylases involved in mRNA turnover. PAN specifically shortens poly(A) tails of RNA and the activity is stimulated by poly(A)-binding protein pab1. PAN deadenylation is followed by rapid degradation of the shortened mRNA tails by the CCR4-NOT complex. Deadenylated mRNAs are then degraded by two alternative mechanisms, namely exosome-mediated 3'-5' exonucleolytic degradation, or deadenylation-dependent mRNA decaping and subsequent 5'-3' exonucleolytic degradation by xrn1. May also be involved in post-transcriptional maturation of mRNA poly(A) tails. ppk26/pan3 acts as a positive regulator for PAN activity, recruiting the catalytic subunit pan2 to mRNA via its interaction with RNA and with pab1. The polypeptide is PAN2-PAN3 deadenylation complex subunit pan3 (ppk26) (Schizosaccharomyces pombe (strain 972 / ATCC 24843) (Fission yeast)).